A 287-amino-acid chain; its full sequence is U1 small nuclear ribonucleoprotein A (287 aa).

The region spanning 16 to 95 (HTIYINNLNE…KPMRIQYAKT (80 aa)) is the RRM 1 domain. Residue K66 is modified to N6-acetyllysine. The disordered stretch occupies residues 106–134 (TYVERDRKREKRKPKSQETPAAKKAVQGG). Positions 125 to 134 (PAAKKAVQGG) are enriched in low complexity. The residue at position 157 (R157) is an Omega-N-methylarginine. An RRM 2 domain is found at 213 to 287 (HILFLTNLPE…NAMKISFAKK (75 aa)).

Belongs to the RRM U1 A/B'' family. In terms of assembly, U1 snRNP is composed of the 7 core Sm proteins SNRPB, SNRPD1, SNRPD2, SNRPD3, SNRPE, SNRPF and SNRPG that assemble in a heptameric protein ring on the Sm site of the small nuclear RNA to form the core snRNP, and at least three U1 snRNP-specific proteins SNRNP70/U1-70K, SNRPA/U1-A and SNRPC/U1-C. Interacts with SFPQ; component of a snRNP-free complex with SFPQ. Interacts with IVNS1ABP (via BACK domain); the interaction is indirect.

It is found in the nucleus. In terms of biological role, component of the spliceosomal U1 snRNP, which is essential for recognition of the pre-mRNA 5' splice-site and the subsequent assembly of the spliceosome. U1 snRNP is the first snRNP to interact with pre-mRNA. This interaction is required for the subsequent binding of U2 snRNP and the U4/U6/U5 tri-snRNP. SNRPA binds stem loop II of U1 snRNA. In a snRNP-free form (SF-A) may be involved in coupled pre-mRNA splicing and polyadenylation process. May bind preferentially to the 5'-UGCAC-3' motif on RNAs. The sequence is that of U1 small nuclear ribonucleoprotein A (Snrpa) from Mus musculus (Mouse).